Consider the following 420-residue polypeptide: Subtilisin-like protease 7 (420 aa).

Positions 1 to 20 are cleaved as a signal peptide; that stretch reads MGFITKAIPLALAAASVING. A propeptide spanning residues 21–119 is cleaved from the precursor; it reads AEIMETRAGV…IERDARVQIN (99 aa). The Inhibitor I9 domain occupies 36–118; the sequence is KYIVVMNDGM…YIERDARVQI (83 aa). Positions 129 to 413 constitute a Peptidase S8 domain; the sequence is SWGLARVGSK…SFPLNIYEEQ (285 aa). Catalysis depends on charge relay system residues Asp161 and His192. N-linked (GlcNAc...) asparagine glycosylation is found at Asn222 and Asn252. Ser346 (charge relay system) is an active-site residue. A glycan (N-linked (GlcNAc...) asparagine) is linked at Asn396.

It belongs to the peptidase S8 family.

It localises to the secreted. Its function is as follows. Secreted subtilisin-like serine protease with keratinolytic activity that contributes to pathogenicity. The polypeptide is Subtilisin-like protease 7 (SUB7) (Arthroderma benhamiae (strain ATCC MYA-4681 / CBS 112371) (Trichophyton mentagrophytes)).